A 95-amino-acid polypeptide reads, in one-letter code: Acylphosphatase (95 aa).

Residues 5–93 (RAHVFIRGKV…GEFKDFKILP (89 aa)) form the Acylphosphatase-like domain. Active-site residues include Arg-20 and Asn-38.

The protein belongs to the acylphosphatase family.

The enzyme catalyses an acyl phosphate + H2O = a carboxylate + phosphate + H(+). This is Acylphosphatase (acyP) from Pyrobaculum aerophilum (strain ATCC 51768 / DSM 7523 / JCM 9630 / CIP 104966 / NBRC 100827 / IM2).